A 150-amino-acid chain; its full sequence is Protein ORF35 (150 aa).

The protein is Protein ORF35 (ORF35) of Homo sapiens (Human).